Reading from the N-terminus, the 539-residue chain is Acid-sensing ion channel 4 (539 aa).

The Cytoplasmic portion of the chain corresponds to M1 to T68. A helical membrane pass occupies residues L69 to A89. Topologically, residues R90–A438 are extracellular. Disulfide bonds link C118-C202 and C180-C187. N191, N243, N341, and N376 each carry an N-linked (GlcNAc...) asparagine glycan. Cystine bridges form between C296/C375, C318/C371, C322/C369, C331/C353, and C333/C345. A helical membrane pass occupies residues L439 to L459. A GAS motif; ion selectivity filter motif is present at residues G452 to S454. Over E460–C539 the chain is Cytoplasmic. A disordered region spans residues K500–G531.

It belongs to the amiloride-sensitive sodium channel (TC 1.A.6) family. ASIC4 subfamily. Homotrimer. Heterotrimer; with other ASIC proteins producing functional channels.

The protein resides in the cell membrane. Does not exhibit measurable stand-alone pH-gated sodium channel activity but may form pH-gated heterotrimeric sodium channels. Its activity could also depend on alternative gating mechanisms. The chain is Acid-sensing ion channel 4 from Mus musculus (Mouse).